A 235-amino-acid polypeptide reads, in one-letter code: Carbohydrate deacetylase (235 aa).

Mg(2+) contacts are provided by His61 and His124.

This sequence belongs to the YdjC deacetylase family. Mg(2+) serves as cofactor.

Functionally, probably catalyzes the deacetylation of acetylated carbohydrates an important step in the degradation of oligosaccharides. This chain is Carbohydrate deacetylase, found in Bacillus cereus (strain 03BB102).